A 278-amino-acid chain; its full sequence is Sulfur carrier protein FdhD (278 aa).

The Cysteine persulfide intermediate role is filled by cysteine 120.

It belongs to the FdhD family.

Its subcellular location is the cytoplasm. In terms of biological role, required for formate dehydrogenase (FDH) activity. Acts as a sulfur carrier protein that transfers sulfur from IscS to the molybdenum cofactor prior to its insertion into FDH. The protein is Sulfur carrier protein FdhD of Bordetella petrii (strain ATCC BAA-461 / DSM 12804 / CCUG 43448).